Consider the following 529-residue polypeptide: Putative UPF0481 protein At3g02645 (529 aa).

Residues Asn365 and Asn403 are each glycosylated (N-linked (GlcNAc...) asparagine). A helical transmembrane segment spans residues 498–518 (ILAFLAAVLLLMLVSLQLFSL).

This sequence belongs to the UPF0481 family.

It localises to the membrane. In Arabidopsis thaliana (Mouse-ear cress), this protein is Putative UPF0481 protein At3g02645.